Reading from the N-terminus, the 285-residue chain is N(G),N(G)-dimethylarginine dimethylaminohydrolase 1 (285 aa).

Ala2 carries the N-acetylalanine modification. Leu30 lines the substrate pocket. Position 33 is a phosphoserine (Ser33). Residues Asp73, Glu78, Asp79, Arg98, and Arg145 each coordinate substrate. His173 (proton donor) is an active-site residue. Position 222 is an S-nitrosocysteine (Cys222). Substrate is bound at residue Val268. Residue Cys274 is modified to S-nitrosocysteine. Cys274 serves as the catalytic Nucleophile. Cys274 lines the Zn(2+) pocket.

It belongs to the DDAH family. As to quaternary structure, monomer. In terms of tissue distribution, detected in skeletal muscle, lung, heart, liver, kidney and brain (at protein level).

It carries out the reaction N(omega),N(omega)-dimethyl-L-arginine + H2O = dimethylamine + L-citrulline. The catalysed reaction is N(omega)-methyl-L-arginine + H2O = L-citrulline + methylamine. Inhibited by zinc ions. Hydrolyzes N(G),N(G)-dimethyl-L-arginine (ADMA) and N(G)-monomethyl-L-arginine (MMA) which act as inhibitors of NOS. Has therefore a role in the regulation of nitric oxide generation. In Mus musculus (Mouse), this protein is N(G),N(G)-dimethylarginine dimethylaminohydrolase 1 (Ddah1).